The chain runs to 446 residues: Glutamyl-tRNA reductase (446 aa).

Residues 49–52 (TCNR), serine 109, 114–116 (ETQ), and glutamine 120 each bind substrate. Residue cysteine 50 is the Nucleophile of the active site. 189 to 194 (GAGETG) provides a ligand contact to NADP(+).

Belongs to the glutamyl-tRNA reductase family. Homodimer.

The catalysed reaction is (S)-4-amino-5-oxopentanoate + tRNA(Glu) + NADP(+) = L-glutamyl-tRNA(Glu) + NADPH + H(+). It participates in porphyrin-containing compound metabolism; protoporphyrin-IX biosynthesis; 5-aminolevulinate from L-glutamyl-tRNA(Glu): step 1/2. Its function is as follows. Catalyzes the NADPH-dependent reduction of glutamyl-tRNA(Glu) to glutamate 1-semialdehyde (GSA). The sequence is that of Glutamyl-tRNA reductase from Exiguobacterium sibiricum (strain DSM 17290 / CCUG 55495 / CIP 109462 / JCM 13490 / 255-15).